We begin with the raw amino-acid sequence, 59 residues long: UPF0434 protein Sputw3181_2540 (59 aa).

Belongs to the UPF0434 family.

This chain is UPF0434 protein Sputw3181_2540, found in Shewanella sp. (strain W3-18-1).